We begin with the raw amino-acid sequence, 254 residues long: Arginine transport ATP-binding protein ArgV (254 aa).

Residues 6 to 250 enclose the ABC transporter domain; the sequence is IDAQQVCKNY…PKEQRTKDFL (245 aa). Residue 38–45 coordinates ATP; that stretch reads GPSGSGKS.

The protein belongs to the ABC transporter superfamily. As to quaternary structure, the complex is probably composed of two ATP-binding proteins (ArgV), two transmembrane proteins (ArgU) and a solute-binding protein (ArgT).

Its subcellular location is the cell membrane. The enzyme catalyses a polar amino acid(out) + ATP + H2O = a polar amino acid(in) + ADP + phosphate + H(+). It catalyses the reaction L-arginine(out) + ATP + H2O = L-arginine(in) + ADP + phosphate + H(+). In terms of biological role, part of the ABC transporter complex ArgTUV involved in L-arginine import. May also transport L-citrulline. Probably responsible for energy coupling to the transport system. This chain is Arginine transport ATP-binding protein ArgV, found in Corynebacterium glutamicum (strain ATCC 13032 / DSM 20300 / JCM 1318 / BCRC 11384 / CCUG 27702 / LMG 3730 / NBRC 12168 / NCIMB 10025 / NRRL B-2784 / 534).